The following is a 365-amino-acid chain: UDP-N-acetylglucosamine--N-acetylmuramyl-(pentapeptide) pyrophosphoryl-undecaprenol N-acetylglucosamine transferase (365 aa).

Residues 10–12, N128, R170, S199, I250, and Q295 each bind UDP-N-acetyl-alpha-D-glucosamine; that span reads TGG.

Belongs to the glycosyltransferase 28 family. MurG subfamily.

The protein resides in the cell inner membrane. It catalyses the reaction di-trans,octa-cis-undecaprenyl diphospho-N-acetyl-alpha-D-muramoyl-L-alanyl-D-glutamyl-meso-2,6-diaminopimeloyl-D-alanyl-D-alanine + UDP-N-acetyl-alpha-D-glucosamine = di-trans,octa-cis-undecaprenyl diphospho-[N-acetyl-alpha-D-glucosaminyl-(1-&gt;4)]-N-acetyl-alpha-D-muramoyl-L-alanyl-D-glutamyl-meso-2,6-diaminopimeloyl-D-alanyl-D-alanine + UDP + H(+). It participates in cell wall biogenesis; peptidoglycan biosynthesis. Its function is as follows. Cell wall formation. Catalyzes the transfer of a GlcNAc subunit on undecaprenyl-pyrophosphoryl-MurNAc-pentapeptide (lipid intermediate I) to form undecaprenyl-pyrophosphoryl-MurNAc-(pentapeptide)GlcNAc (lipid intermediate II). The polypeptide is UDP-N-acetylglucosamine--N-acetylmuramyl-(pentapeptide) pyrophosphoryl-undecaprenol N-acetylglucosamine transferase (Chlorobium luteolum (strain DSM 273 / BCRC 81028 / 2530) (Pelodictyon luteolum)).